A 361-amino-acid polypeptide reads, in one-letter code: Peptide chain release factor 1 (361 aa).

N5-methylglutamine is present on Gln-237. The disordered stretch occupies residues 287–306 (KRAAEEASTRKSLVGSGDRS).

Belongs to the prokaryotic/mitochondrial release factor family. Methylated by PrmC. Methylation increases the termination efficiency of RF1.

Its subcellular location is the cytoplasm. Its function is as follows. Peptide chain release factor 1 directs the termination of translation in response to the peptide chain termination codons UAG and UAA. The polypeptide is Peptide chain release factor 1 (Alteromonas mediterranea (strain DSM 17117 / CIP 110805 / LMG 28347 / Deep ecotype)).